A 317-amino-acid polypeptide reads, in one-letter code: MSFSSKVKNEICRYTELSREEAIAELSGIMKVSGTLGFSGDMKMNFRVSTENPAIARLTFKLLKDHFNIHTKIFVKKSNSLKKNNIYLVVIDNNMGVKDLLKEVGVLKEEEGMITLDYSVPERMVRDDNCRRVFIRGVFLGGGSISNPEKTYHLEFVTHHEDYAKELSEVINTYGLNSKVIQRKSSFVIYLKEGEQIVDLLNIIGAHDSLLELENVRIMKEMRNNVNRLVNCETANLSKTVNAAVRQIGSIKLIEEEIGLQRLPENLREVAELRLNFPNESLKELGQMLDPPVGKSGINHRLRRIEKIAEELRKEGK.

The H-T-H motif DNA-binding region spans 281–314 (SLKELGQMLDPPVGKSGINHRLRRIEKIAEELRK).

The protein belongs to the WhiA family.

Involved in cell division and chromosome segregation. This is Probable cell division protein WhiA from Clostridium novyi (strain NT).